A 432-amino-acid polypeptide reads, in one-letter code: MPAIVLIGAQWGDEGKGKATDLLGGRVQWVVRYQGGNNAGHTVVLPTGENFALHLIPSGVLTPGVTNVIGNGVVIDPGVLLNELRGLQDRGVDTAKLLISADAHLLMPYHIAIDKVTERYMGSKKIGTTGRGIGPCYQDKIARIGIRVADVLDPEQLTHKVEAACEFKNQVLVKIYNRKALDPAQVVDALLEQAEGFKHRIADTRLLLNAALEAGETVLLEGSQGTLLDVDHGTYPYVTSSNPTAGGAAVGSGIGPTRIGTVLGILKAYTTRVGSGPFPTELFDEHGEYLSKTGREFGVTTGRRRRCGWFDAVIARYAARVNGITDYFLTKLDVLSSLESVPVCVGYEIDGRRTRDMPMTQRDLCRAKPVYEELPGWWEDISGAREFDDLPAKARDYVLRLEQLAGAPVSCIGVGPGREQTIVRRDVLQDRP.

GTP contacts are provided by residues 12–18 (GDEGKGK) and 40–42 (GHT). D13 acts as the Proton acceptor in catalysis. D13 and G40 together coordinate Mg(2+). Residues 13–16 (DEGK), 38–41 (NAGH), T129, R143, Q224, T239, and R303 contribute to the IMP site. H41 acts as the Proton donor in catalysis. Substrate is bound at residue 299 to 305 (VTTGRRR). GTP is bound by residues R305, 331–333 (KLD), and 413–415 (GVG).

It belongs to the adenylosuccinate synthetase family. In terms of assembly, homodimer. Mg(2+) serves as cofactor.

The protein localises to the cytoplasm. The enzyme catalyses IMP + L-aspartate + GTP = N(6)-(1,2-dicarboxyethyl)-AMP + GDP + phosphate + 2 H(+). The protein operates within purine metabolism; AMP biosynthesis via de novo pathway; AMP from IMP: step 1/2. In terms of biological role, plays an important role in the de novo pathway of purine nucleotide biosynthesis. Catalyzes the first committed step in the biosynthesis of AMP from IMP. The protein is Adenylosuccinate synthetase of Mycobacterium tuberculosis (strain CDC 1551 / Oshkosh).